A 30-amino-acid polypeptide reads, in one-letter code: Beta-endorphin-2 (30 aa).

The residue at position 1 (Tyr-1) is an N-acetyltyrosine.

It belongs to the POMC family.

The protein resides in the secreted. The polypeptide is Beta-endorphin-2 (Oncorhynchus keta (Chum salmon)).